Reading from the N-terminus, the 440-residue chain is Adenosylhomocysteinase (440 aa).

T47, D123, and E148 together coordinate substrate. 149–151 (TTT) lines the NAD(+) pocket. The substrate site is built by K178 and D182. NAD(+) is bound by residues N183, 228-233 (GFGDVG), E251, 307-309 (IGH), and N354.

This sequence belongs to the adenosylhomocysteinase family. It depends on NAD(+) as a cofactor.

The enzyme catalyses S-adenosyl-L-homocysteine + H2O = L-homocysteine + adenosine. It participates in amino-acid biosynthesis; L-homocysteine biosynthesis; L-homocysteine from S-adenosyl-L-homocysteine: step 1/1. Adenosylhomocysteine is a competitive inhibitor of S-adenosyl-L-methionine-dependent methyl transferase reactions; therefore adenosylhomocysteinase may play a key role in the control of methylations via regulation of the intracellular concentration of adenosylhomocysteine. This chain is Adenosylhomocysteinase (SAHH), found in Pneumocystis carinii.